The primary structure comprises 1193 residues: MNNMNLNNMNLNNMNLLKEVSEENRLMLLKDYFQTSGLVKHQLETFDHFIFHDIKTIIDDEASIIFNGKRSLSSQIKNGAVEEGYNRKESEKIMLKFENVFVAKPTITNDDTTVRPLYPAEARQKMITYDSFVFVDVLEYVLRDEEEILVNKHLRVQIAKIPIMLRSSTCNLYNCTPQERIELGEGIEDPGGYFIINGNERVLIGQLRNAYNRSICFRNKFSEPLTCDMRSMSEETGHSVLIQLRLNDSPISQKRNLKKLDKNGTIDLIISQTKTPIPISFVFRVLKVATIDKLKFLIGDEEELDKYLIKIVEETSDGGIFDDMEIEISQEDDFNEENEESTEKKKITQFIEQDMFPHLGVSSTHEEKAILLGKMVRKLLLVNETSINANKFAQRANDETNKTNKTNKMYYTQEDRDNYSNKRVETAGVLCFELFRMLYKRFIKSNINQLEKRNRVEMDVISKNAFITTGLHFSFSTGNWGVQKNNYIRTGVAQIPQNKVSFGAFFSYLRRFVIPMGKEGKNTKIRQIHPSSIFFACPSETPEGQFVGITLNFSMLAEVSIRTSSVVIKEIIEASHQAFKHVHEISLEENKQFLSKLSIIFVNGGICGLTSKPQQLLSDVRDLKLKHCLKYDVSAVFIPELKEVHISSDAGRFIRPVLNLQSIKTNGNVMWNSFQNCLENGHVVYKDAYEIEQSQIAINLQDLSRYPTVYDSMEIHASCMLGVMAAQIPFAEHTQSPRLCYQSSMAKQAIGNIPSHHVKSDNTTRVMDYVQRPLVTTQIAEMNRFNDFPNGLNAMVAVAIYTGFNQEDSIILNKASIDRGMFHVVTYKTIIVEERKIGVNEKICMPVASVRRMNNYSLLEDNPESPYFGVVKVKSFVKRNDVLVGKVITKISKDGTRQETDHSTIVSISEEGKVDRIIRTSKKGILMFKIVIAQQKRPEIGDKFCSAMAQKGTVGMILEEVDMPFMEDGSIPDMIINPHCLPSRMTINQIMASIMGKTCCAKNETFGDASPFQESSLEKPQDKIHALCKELEECGYNYNGTETMMCGWNGKKLRAEIFFGPVYYHRLTHMVSDKIFSRASTNQKRHAITRQPLNGRANEGGLRIGEMEKDCMLVHGISKFLHEKMFDQSDKFIINLCVPCKSYFKVVKTQNGFFCSGCNGIDIVKFNCPFAAKLFFQELTAMGQKLEFKVKNA.

Asp-808 serves as a coordination point for Mg(2+). Positions 1137, 1140, 1155, and 1158 each coordinate Zn(2+). The segment at 1137-1158 (CVPCKSYFKVVKTQNGFFCSGC) adopts a C4-type zinc-finger fold.

Belongs to the RNA polymerase beta chain family.

The catalysed reaction is RNA(n) + a ribonucleoside 5'-triphosphate = RNA(n+1) + diphosphate. Component of the DNA-dependent RNA polymerase that catalyzes the transcription of DNA into RNA using the four ribonucleoside triphosphates as substrates. Second largest component of RNA polymerase II which synthesizes mRNA precursors and many functional non-coding RNAs. Proposed to contribute to the polymerase catalytic activity and forms the polymerase active center together with the largest subunit. The protein is Probable DNA-directed RNA polymerase II subunit RPB2 homolog of Invertebrate iridescent virus 6 (IIV-6).